The chain runs to 384 residues: Dual-specificity RNA methyltransferase RlmN (384 aa).

The Proton acceptor role is filled by Glu-105. The region spanning 111–350 (EDDRATLCVS…TIVRKTRGDD (240 aa)) is the Radical SAM core domain. Cys-118 and Cys-355 are disulfide-bonded. [4Fe-4S] cluster is bound by residues Cys-125, Cys-129, and Cys-132. Residues 179-180 (GE), Ser-211, 233-235 (SLH), and Asn-312 contribute to the S-adenosyl-L-methionine site. The S-methylcysteine intermediate role is filled by Cys-355.

This sequence belongs to the radical SAM superfamily. RlmN family. Requires [4Fe-4S] cluster as cofactor.

Its subcellular location is the cytoplasm. The catalysed reaction is adenosine(2503) in 23S rRNA + 2 reduced [2Fe-2S]-[ferredoxin] + 2 S-adenosyl-L-methionine = 2-methyladenosine(2503) in 23S rRNA + 5'-deoxyadenosine + L-methionine + 2 oxidized [2Fe-2S]-[ferredoxin] + S-adenosyl-L-homocysteine. It catalyses the reaction adenosine(37) in tRNA + 2 reduced [2Fe-2S]-[ferredoxin] + 2 S-adenosyl-L-methionine = 2-methyladenosine(37) in tRNA + 5'-deoxyadenosine + L-methionine + 2 oxidized [2Fe-2S]-[ferredoxin] + S-adenosyl-L-homocysteine. Functionally, specifically methylates position 2 of adenine 2503 in 23S rRNA and position 2 of adenine 37 in tRNAs. m2A2503 modification seems to play a crucial role in the proofreading step occurring at the peptidyl transferase center and thus would serve to optimize ribosomal fidelity. In Escherichia coli O157:H7, this protein is Dual-specificity RNA methyltransferase RlmN.